The chain runs to 228 residues: Geranylgeranylglyceryl phosphate synthase (228 aa).

A sn-glycerol 1-phosphate-binding site is contributed by K13. D15 and T41 together coordinate Mg(2+). Sn-glycerol 1-phosphate contacts are provided by residues 159-164 (YIEYSG), G189, and 209-210 (GN).

It belongs to the GGGP/HepGP synthase family. Group I subfamily. Mg(2+) serves as cofactor.

The protein localises to the cytoplasm. It catalyses the reaction sn-glycerol 1-phosphate + (2E,6E,10E)-geranylgeranyl diphosphate = sn-3-O-(geranylgeranyl)glycerol 1-phosphate + diphosphate. Its pathway is membrane lipid metabolism; glycerophospholipid metabolism. Prenyltransferase that catalyzes the transfer of the geranylgeranyl moiety of geranylgeranyl diphosphate (GGPP) to the C3 hydroxyl of sn-glycerol-1-phosphate (G1P). This reaction is the first ether-bond-formation step in the biosynthesis of archaeal membrane lipids. The sequence is that of Geranylgeranylglyceryl phosphate synthase from Methanospirillum hungatei JF-1 (strain ATCC 27890 / DSM 864 / NBRC 100397 / JF-1).